The primary structure comprises 83 residues: Large ribosomal subunit protein eL14 (83 aa).

Belongs to the eukaryotic ribosomal protein eL14 family.

In Thermococcus gammatolerans (strain DSM 15229 / JCM 11827 / EJ3), this protein is Large ribosomal subunit protein eL14.